We begin with the raw amino-acid sequence, 630 residues long: Glutamyl-tRNA(Gln) amidotransferase subunit E (630 aa).

Belongs to the GatB/GatE family. GatE subfamily. In terms of assembly, heterodimer of GatD and GatE.

It carries out the reaction L-glutamyl-tRNA(Gln) + L-glutamine + ATP + H2O = L-glutaminyl-tRNA(Gln) + L-glutamate + ADP + phosphate + H(+). Allows the formation of correctly charged Gln-tRNA(Gln) through the transamidation of misacylated Glu-tRNA(Gln) in organisms which lack glutaminyl-tRNA synthetase. The reaction takes place in the presence of glutamine and ATP through an activated gamma-phospho-Glu-tRNA(Gln). The GatDE system is specific for glutamate and does not act on aspartate. The sequence is that of Glutamyl-tRNA(Gln) amidotransferase subunit E from Methanocaldococcus jannaschii (strain ATCC 43067 / DSM 2661 / JAL-1 / JCM 10045 / NBRC 100440) (Methanococcus jannaschii).